Reading from the N-terminus, the 121-residue chain is Acidic phospholipase A2 PLA-1 (121 aa).

7 cysteine pairs are disulfide-bonded: cysteine 26/cysteine 115, cysteine 28/cysteine 44, cysteine 43/cysteine 95, cysteine 49/cysteine 121, cysteine 50/cysteine 88, cysteine 57/cysteine 81, and cysteine 75/cysteine 86. Ca(2+)-binding residues include tyrosine 27, glycine 29, and glycine 31. Residue histidine 47 is part of the active site. Aspartate 48 contacts Ca(2+). The active site involves aspartate 89.

The protein belongs to the phospholipase A2 family. Group II subfamily. D49 sub-subfamily. Ca(2+) is required as a cofactor. Expressed by the venom gland.

The protein localises to the secreted. It catalyses the reaction a 1,2-diacyl-sn-glycero-3-phosphocholine + H2O = a 1-acyl-sn-glycero-3-phosphocholine + a fatty acid + H(+). Functionally, PLA2 catalyzes the calcium-dependent hydrolysis of the 2-acyl groups in 3-sn-phosphoglycerides. This is Acidic phospholipase A2 PLA-1 from Eristicophis macmahoni (Leaf-nosed viper).